The chain runs to 429 residues: Probable M18 family aminopeptidase 2 (429 aa).

Zn(2+) is bound by residues H82, H156, and H401.

The protein belongs to the peptidase M18 family. It depends on Zn(2+) as a cofactor.

The chain is Probable M18 family aminopeptidase 2 from Pseudomonas fluorescens (strain Pf0-1).